The chain runs to 304 residues: MKKTSDYAVAVIGLGSMGFGAAASCINAGLTTYGVDINPQALEKLRQAGAAQADTRIDAFADKLDAVVLLVVNATQVNGILFGEPQVAAKLKPGTVVMVSSTISAQDAKNIEQRLAEHQLVMLDAPVSGGAAKAAAGDMTVMASGSDLAFEKLKPVLDAVAGKVYRIGEEIGLGATVKIIHQLLAGVHIAAGAEAMALAARADIPLDIMYDVVTNAAGNSWMFENRMRHVVDGDYTPKSAVDIFVKDLGLVTDTAKSLHFPLPLASTAFNMFTAASNAGFGKEDDSAVIKIFNGITLPEKKEAP.

NAD(+) contacts are provided by residues 7 to 35 (YAVA…TYGV) and threonine 102. The active site involves lysine 178. Lysine 246 contacts NAD(+).

Belongs to the HIBADH-related family. L-threonate dehydrogenase subfamily.

The enzyme catalyses L-threonate + NAD(+) = 2-dehydro-L-erythronate + NADH + H(+). Functionally, catalyzes oxidation of L-threonate to 2-oxo-tetronate. Can use either NAD(+) or NADP(+) as cosubstrate, with a preference for NAD(+). The chain is L-threonate dehydrogenase from Pectobacterium atrosepticum (strain SCRI 1043 / ATCC BAA-672) (Erwinia carotovora subsp. atroseptica).